Reading from the N-terminus, the 932-residue chain is 2-oxoglutarate dehydrogenase E1 component (932 aa).

It belongs to the alpha-ketoglutarate dehydrogenase family. In terms of assembly, homodimer. Part of the 2-oxoglutarate dehydrogenase (OGDH) complex composed of E1 (2-oxoglutarate dehydrogenase), E2 (dihydrolipoamide succinyltransferase) and E3 (dihydrolipoamide dehydrogenase); the complex contains multiple copies of the three enzymatic components (E1, E2 and E3). Thiamine diphosphate serves as cofactor.

The catalysed reaction is N(6)-[(R)-lipoyl]-L-lysyl-[protein] + 2-oxoglutarate + H(+) = N(6)-[(R)-S(8)-succinyldihydrolipoyl]-L-lysyl-[protein] + CO2. In terms of biological role, E1 component of the 2-oxoglutarate dehydrogenase (OGDH) complex which catalyzes the decarboxylation of 2-oxoglutarate, the first step in the conversion of 2-oxoglutarate to succinyl-CoA and CO(2). This chain is 2-oxoglutarate dehydrogenase E1 component, found in Staphylococcus aureus (strain MRSA252).